The primary structure comprises 1088 residues: RNA-directed RNA polymerase (1088 aa).

The region spanning 501 to 687 is the RdRp catalytic domain; that stretch reads LSYGDVTRFL…AKRYIAGGKI (187 aa).

Belongs to the reoviridae RNA-directed RNA polymerase family. As to quaternary structure, interacts with VP3 (Potential). Interacts with VP2; this interaction activates VP1. Interacts with NSP5; this interaction is probably necessary for the formation of functional virus factories. Interacts with NSP2; this interaction is weak. The cofactor is Mg(2+).

Its subcellular location is the virion. It carries out the reaction RNA(n) + a ribonucleoside 5'-triphosphate = RNA(n+1) + diphosphate. In terms of biological role, RNA-directed RNA polymerase that is involved in both transcription and genome replication. Together with VP3 capping enzyme, forms an enzyme complex positioned near the channels situated at each of the five-fold vertices of the core. Following infection, the outermost layer of the virus is lost, leaving a double-layered particle (DLP) made up of the core and VP6 shell. VP1 then catalyzes the transcription of fully conservative plus-strand genomic RNAs that are extruded through the DLP's channels into the cytoplasm where they function as mRNAs for translation of viral proteins. One copy of each of the viral (+)RNAs is also recruited during core assembly, together with newly synthesized polymerase complexes and VP2. The polymerase of these novo-formed particles catalyzes the synthesis of complementary minus-strands leading to dsRNA formation. To do so, the polymerase specifically recognizes and binds 4 bases 5'-UGUG-3' in the conserved 3'-sequence of plus-strand RNA templates. VP2 presumably activates the autoinhibited VP1-RNA complex to coordinate packaging and genome replication. Once dsRNA synthesis is complete, the polymerase switches to the transcriptional mode, thus providing secondary transcription. The sequence is that of RNA-directed RNA polymerase from Homo sapiens (Human).